A 157-amino-acid chain; its full sequence is 2-C-methyl-D-erythritol 2,4-cyclodiphosphate synthase (157 aa).

Asp8 and His10 together coordinate a divalent metal cation. 4-CDP-2-C-methyl-D-erythritol 2-phosphate is bound by residues 8–10 (DVH) and 34–35 (HS). A divalent metal cation is bound at residue His42. 4-CDP-2-C-methyl-D-erythritol 2-phosphate-binding positions include 56–58 (DIG), 61–65 (FPDTD), 100–106 (AQAPKML), 132–135 (TTTE), Phe139, and Arg142.

The protein belongs to the IspF family. As to quaternary structure, homotrimer. The cofactor is a divalent metal cation.

It catalyses the reaction 4-CDP-2-C-methyl-D-erythritol 2-phosphate = 2-C-methyl-D-erythritol 2,4-cyclic diphosphate + CMP. It functions in the pathway isoprenoid biosynthesis; isopentenyl diphosphate biosynthesis via DXP pathway; isopentenyl diphosphate from 1-deoxy-D-xylulose 5-phosphate: step 4/6. Involved in the biosynthesis of isopentenyl diphosphate (IPP) and dimethylallyl diphosphate (DMAPP), two major building blocks of isoprenoid compounds. Catalyzes the conversion of 4-diphosphocytidyl-2-C-methyl-D-erythritol 2-phosphate (CDP-ME2P) to 2-C-methyl-D-erythritol 2,4-cyclodiphosphate (ME-CPP) with a corresponding release of cytidine 5-monophosphate (CMP). The protein is 2-C-methyl-D-erythritol 2,4-cyclodiphosphate synthase of Photorhabdus laumondii subsp. laumondii (strain DSM 15139 / CIP 105565 / TT01) (Photorhabdus luminescens subsp. laumondii).